The primary structure comprises 558 residues: Poly(A) polymerase PAPalpha (558 aa).

The segment covering 1–17 (MNTKTYGVTEPISTNGP) has biased composition (polar residues). Positions 1 to 20 (MNTKTYGVTEPISTNGPTPK) are disordered. ATP contacts are provided by residues 86 to 88 (FGS), 99 to 101 (DID), Asp153, Lys214, Tyr223, and 232 to 233 (GV). Positions 99, 101, and 153 each coordinate Mg(2+). Residues 516 to 558 (VYEDGEERPKKSGKKRKKVIKEDGQKRVRNESPASSASVNGSS) form a disordered region. Positions 535–545 (IKEDGQKRVRN) are enriched in basic and acidic residues. Over residues 547–558 (SPASSASVNGSS) the composition is skewed to low complexity.

This sequence belongs to the poly(A) polymerase family. The cofactor is Mg(2+). Requires Mn(2+) as cofactor.

The protein resides in the nucleus. The enzyme catalyses RNA(n) + ATP = RNA(n)-3'-adenine ribonucleotide + diphosphate. Its function is as follows. Polymerase that creates the 3'-poly(A) tail of mRNA's. May acquire specificity through interaction with a cleavage and polyadenylation factor. In Candida albicans (strain SC5314 / ATCC MYA-2876) (Yeast), this protein is Poly(A) polymerase PAPalpha (PAPALPHA).